The sequence spans 156 residues: Ribosomal RNA large subunit methyltransferase H (156 aa).

S-adenosyl-L-methionine contacts are provided by residues leucine 73, glycine 104, and 123–128 (ISSMTL).

It belongs to the RNA methyltransferase RlmH family. Homodimer.

It localises to the cytoplasm. The enzyme catalyses pseudouridine(1915) in 23S rRNA + S-adenosyl-L-methionine = N(3)-methylpseudouridine(1915) in 23S rRNA + S-adenosyl-L-homocysteine + H(+). Specifically methylates the pseudouridine at position 1915 (m3Psi1915) in 23S rRNA. In Janthinobacterium sp. (strain Marseille) (Minibacterium massiliensis), this protein is Ribosomal RNA large subunit methyltransferase H.